Consider the following 212-residue polypeptide: Ribonuclease HII (212 aa).

The RNase H type-2 domain occupies 12–201; that stretch reads ELVAGVDEVG…VRAMLEQVSI (190 aa). A divalent metal cation-binding residues include Asp18, Glu19, and Asp110.

This sequence belongs to the RNase HII family. It depends on Mn(2+) as a cofactor. Mg(2+) serves as cofactor.

It localises to the cytoplasm. It catalyses the reaction Endonucleolytic cleavage to 5'-phosphomonoester.. Its function is as follows. Endonuclease that specifically degrades the RNA of RNA-DNA hybrids. In Stutzerimonas stutzeri (strain A1501) (Pseudomonas stutzeri), this protein is Ribonuclease HII.